The primary structure comprises 298 residues: ATP synthase gamma chain (298 aa).

The protein belongs to the ATPase gamma chain family. In terms of assembly, F-type ATPases have 2 components, CF(1) - the catalytic core - and CF(0) - the membrane proton channel. CF(1) has five subunits: alpha(3), beta(3), gamma(1), delta(1), epsilon(1). CF(0) has three main subunits: a, b and c.

It is found in the cell inner membrane. In terms of biological role, produces ATP from ADP in the presence of a proton gradient across the membrane. The gamma chain is believed to be important in regulating ATPase activity and the flow of protons through the CF(0) complex. The polypeptide is ATP synthase gamma chain (Francisella tularensis subsp. tularensis (strain FSC 198)).